We begin with the raw amino-acid sequence, 522 residues long: Lysine--tRNA ligase (522 aa).

Residues 44 to 52 (PSGLPHIGT) carry the 'HIGH' region motif. The 'KMSKS' region signature appears at 290–294 (KISKS). Lys293 is a binding site for ATP.

This sequence belongs to the class-I aminoacyl-tRNA synthetase family.

The protein resides in the cytoplasm. The enzyme catalyses tRNA(Lys) + L-lysine + ATP = L-lysyl-tRNA(Lys) + AMP + diphosphate. In Rickettsia bellii (strain OSU 85-389), this protein is Lysine--tRNA ligase.